The sequence spans 595 residues: Arginine--tRNA ligase (595 aa).

Positions 132–142 (ANPTGPLHVGH) match the 'HIGH' region motif.

Belongs to the class-I aminoacyl-tRNA synthetase family. As to quaternary structure, monomer.

Its subcellular location is the cytoplasm. It carries out the reaction tRNA(Arg) + L-arginine + ATP = L-arginyl-tRNA(Arg) + AMP + diphosphate. This Cupriavidus taiwanensis (strain DSM 17343 / BCRC 17206 / CCUG 44338 / CIP 107171 / LMG 19424 / R1) (Ralstonia taiwanensis (strain LMG 19424)) protein is Arginine--tRNA ligase.